An 841-amino-acid chain; its full sequence is Transcription regulator protein BACH2 (841 aa).

The region spanning 37–103 (CDVTLIVERK…AYTAKLLLSR (67 aa)) is the BTB domain. Disordered regions lie at residues 153–173 (HEDC…TMDS), 204–226 (EALL…DALT), and 246–329 (SSHS…AACL). Over residues 160 to 172 (AGEEEDEEEETMD) the composition is skewed to acidic residues. 2 stretches are compositionally biased toward basic and acidic residues: residues 214–224 (TDTKESSEKDA) and 298–313 (PDAK…DRKQ). Phosphoserine is present on serine 315. Glycyl lysine isopeptide (Lys-Gly) (interchain with G-Cter in SUMO2) cross-links involve residues lysine 382 and lysine 421. Position 521 is a phosphoserine; by RPS6KB1 (serine 521). The segment at 583–610 (QSYGTNSSDESGSFSEADSESCPVQDRG) is disordered. Residues 584 to 598 (SYGTNSSDESGSFSE) show a composition bias toward polar residues. In terms of domain architecture, bZIP spans 646–709 (FIHDVRRRSK…GELLDNFSCL (64 aa)). The interval 651–667 (RRRSKNRIAAQRCRKRK) is basic motif. Residues 671–678 (IQNLECEI) are leucine-zipper. Residues 777-816 (PGPPWAPSNTSENCTSGRRLEGTDPGTFSERGPPLEPRSQ) are disordered. A Nuclear export signal motif is present at residues 821-841 (DFCQEMTDKCTTDEQPRKDYT).

This sequence belongs to the bZIP family. CNC subfamily. As to quaternary structure, homodimer; disulfide-linked. Heterodimer of BACH2 and Maf-related transcription factors. Post-translationally, phosphorylation at Ser-521 downstream of the PI-3K pathway promotes nuclear export. In terms of processing, the reversible disulfide bond may provide a mechanism to regulate the activity in oxidative stress responses. As to expression, B-cell specific.

It localises to the cytoplasm. The protein resides in the nucleus. Functionally, transcriptional regulator that acts as a repressor or activator. Binds to Maf recognition elements (MARE). Plays an important role in coordinating transcription activation and repression by MAFK. Induces apoptosis in response to oxidative stress through repression of the antiapoptotic factor HMOX1. Positively regulates the nuclear import of actin. Is a key regulator of adaptive immunity, crucial for the maintenance of regulatory T-cell function and B-cell maturation. This chain is Transcription regulator protein BACH2 (BACH2), found in Homo sapiens (Human).